The chain runs to 33 residues: Brevinin-2Rh (33 aa).

A disulfide bridge links cysteine 27 with cysteine 33.

Expressed by the skin glands.

Its subcellular location is the secreted. In terms of biological role, antimicrobial peptide. This is Brevinin-2Rh from Pelophylax ridibundus (Marsh frog).